A 429-amino-acid chain; its full sequence is D-galactonate dehydratase family member Caci_4410 (429 aa).

The disordered stretch occupies residues 1-22 (MTDANHLLDPSGALPQTRPPWT). Asp233 is a binding site for Mg(2+). A D-arabinonate-binding site is contributed by His235. The Mg(2+) site is built by Glu259 and Glu285. 4 residues coordinate D-arabinonate: Glu285, Arg306, His335, and Glu362.

This sequence belongs to the mandelate racemase/muconate lactonizing enzyme family. GalD subfamily.

In terms of biological role, has no detectable activity with D-mannonate and with a panel of 70 other acid sugars (in vitro), in spite of the conservation of the residues that are expected to be important for catalytic activity and cofactor binding. May have evolved a divergent function. This chain is D-galactonate dehydratase family member Caci_4410, found in Catenulispora acidiphila (strain DSM 44928 / JCM 14897 / NBRC 102108 / NRRL B-24433 / ID139908).